The following is an 84-amino-acid chain: Small ribosomal subunit protein uS17 (84 aa).

The protein belongs to the universal ribosomal protein uS17 family. As to quaternary structure, part of the 30S ribosomal subunit.

One of the primary rRNA binding proteins, it binds specifically to the 5'-end of 16S ribosomal RNA. The protein is Small ribosomal subunit protein uS17 of Enterobacter sp. (strain 638).